Here is a 222-residue protein sequence, read N- to C-terminus: Fibrillarin-like rRNA/tRNA 2'-O-methyltransferase (222 aa).

Residues 86–87 (TT), 104–105 (EV), 129–130 (DA), and 149–152 (DISQ) each bind S-adenosyl-L-methionine.

It belongs to the methyltransferase superfamily. Fibrillarin family. Interacts with nop5. Component of box C/D small ribonucleoprotein (sRNP) particles that contain rpl7ae, FlpA and nop5, plus a guide RNA.

Functionally, involved in pre-rRNA and tRNA processing. Utilizes the methyl donor S-adenosyl-L-methionine to catalyze the site-specific 2'-hydroxyl methylation of ribose moieties in rRNA and tRNA. Site specificity is provided by a guide RNA that base pairs with the substrate. Methylation occurs at a characteristic distance from the sequence involved in base pairing with the guide RNA. In Thermoplasma volcanium (strain ATCC 51530 / DSM 4299 / JCM 9571 / NBRC 15438 / GSS1), this protein is Fibrillarin-like rRNA/tRNA 2'-O-methyltransferase.